Reading from the N-terminus, the 489-residue chain is GTPase Der (489 aa).

2 consecutive EngA-type G domains span residues 30 to 199 and 227 to 403; these read PVVS…KDKP and FRLA…SRSH. Residues 36 to 43, 85 to 89, 151 to 154, 233 to 240, 280 to 284, and 345 to 348 contribute to the GTP site; these read GRQNVGKS, DTPGL, NKAD, GKPNSGKS, DTAGI, and NKWD. In terms of domain architecture, KH-like spans 404–488; that stretch reads RKVSTSELNK…PIRLEFRSDR (85 aa).

The protein belongs to the TRAFAC class TrmE-Era-EngA-EngB-Septin-like GTPase superfamily. EngA (Der) GTPase family. Associates with the 50S ribosomal subunit.

Its function is as follows. GTPase that plays an essential role in the late steps of ribosome biogenesis. The polypeptide is GTPase Der (Leptospira interrogans serogroup Icterohaemorrhagiae serovar Lai (strain 56601)).